The sequence spans 282 residues: 4-diphosphocytidyl-2-C-methyl-D-erythritol kinase (282 aa).

K9 is a catalytic residue. Residue 98-108 coordinates ATP; it reads PMGGGLGGGSS. D140 is a catalytic residue.

This sequence belongs to the GHMP kinase family. IspE subfamily. As to quaternary structure, homodimer.

The catalysed reaction is 4-CDP-2-C-methyl-D-erythritol + ATP = 4-CDP-2-C-methyl-D-erythritol 2-phosphate + ADP + H(+). It participates in isoprenoid biosynthesis; isopentenyl diphosphate biosynthesis via DXP pathway; isopentenyl diphosphate from 1-deoxy-D-xylulose 5-phosphate: step 3/6. In terms of biological role, catalyzes the phosphorylation of the position 2 hydroxy group of 4-diphosphocytidyl-2C-methyl-D-erythritol. The protein is 4-diphosphocytidyl-2-C-methyl-D-erythritol kinase of Salmonella agona (strain SL483).